A 664-amino-acid polypeptide reads, in one-letter code: Macoilin (664 aa).

4 helical membrane-spanning segments follow: residues 28–48, 75–95, 120–140, and 154–174; these read TFLY…DFVL, AFSV…LLFI, VCLP…AIRF, and FAAH…KSYV. Basic and acidic residues predominate over residues 253-265; that stretch reads REKGKEKDKDAKK. The interval 253-274 is disordered; it reads REKGKEKDKDAKKHNLGINNNN. Residue serine 305 is modified to Phosphoserine. The span at 320–348 shows a compositional bias: polar residues; that stretch reads KNYKNASGVVNSSPRSHSATNGSIPSSSS. The disordered stretch occupies residues 320 to 375; that stretch reads KNYKNASGVVNSSPRSHSATNGSIPSSSSKNEKKQKCTSKSPSTHKDLMENCIPNN. An N-linked (GlcNAc...) asparagine glycan is attached at asparagine 324. Position 332 is a phosphoserine (serine 332). N-linked (GlcNAc...) asparagine glycosylation is found at asparagine 340 and asparagine 452. The interval 630 to 664 is disordered; that stretch reads TSPLSPVSPHYSSKFVETSPSGLDPNASVYQPLKK. Phosphoserine occurs at positions 631 and 634. Asparagine 655 is a glycosylation site (N-linked (GlcNAc...) asparagine).

Belongs to the macoilin family.

The protein localises to the rough endoplasmic reticulum membrane. It is found in the nucleus membrane. Functionally, plays a role in the regulation of neuronal activity. The sequence is that of Macoilin (MACO1) from Macaca mulatta (Rhesus macaque).